The chain runs to 344 residues: Phosphate acyltransferase (344 aa).

Belongs to the PlsX family. Homodimer. Probably interacts with PlsY.

It localises to the cytoplasm. The enzyme catalyses a fatty acyl-[ACP] + phosphate = an acyl phosphate + holo-[ACP]. It functions in the pathway lipid metabolism; phospholipid metabolism. In terms of biological role, catalyzes the reversible formation of acyl-phosphate (acyl-PO(4)) from acyl-[acyl-carrier-protein] (acyl-ACP). This enzyme utilizes acyl-ACP as fatty acyl donor, but not acyl-CoA. This chain is Phosphate acyltransferase, found in Erwinia tasmaniensis (strain DSM 17950 / CFBP 7177 / CIP 109463 / NCPPB 4357 / Et1/99).